A 21-amino-acid chain; its full sequence is Bombinin-H4 (21 aa).

Position 2 is a D-allo-isoleucine (isoleucine 2). The residue at position 20 (isoleucine 20) is an Isoleucine amide.

It belongs to the bombinin family. In terms of tissue distribution, expressed by the skin glands.

It localises to the secreted. Functionally, has antimicrobial and hemolytic activities. This chain is Bombinin-H4, found in Bombina variegata (Yellow-bellied toad).